The sequence spans 383 residues: Alkanesulfonate monooxygenase (383 aa).

This sequence belongs to the SsuD family. As to quaternary structure, homotetramer.

It carries out the reaction an alkanesulfonate + FMNH2 + O2 = an aldehyde + FMN + sulfite + H2O + 2 H(+). Functionally, catalyzes the desulfonation of aliphatic sulfonates. In Erwinia pyrifoliae (strain DSM 12163 / CIP 106111 / Ep16/96), this protein is Alkanesulfonate monooxygenase.